The chain runs to 145 residues: uncharacterized protein (145 aa).

This is an uncharacterized protein from Synechocystis sp. (strain ATCC 27184 / PCC 6803 / Kazusa).